The chain runs to 523 residues: Probable FAD synthase (523 aa).

The tract at residues 20 to 111 is molybdenum cofactor biosynthesis protein-like; it reads AIVVIGDEIL…TDQLHFSDEI (92 aa). The FAD synthase stretch occupies residues 332–489; sequence QIALSFNGGK…SLGGRDNTVK (158 aa).

In the N-terminal section; belongs to the MoaB/Mog family. It in the C-terminal section; belongs to the PAPS reductase family. FAD1 subfamily. Requires Mg(2+) as cofactor.

The catalysed reaction is FMN + ATP + H(+) = FAD + diphosphate. Its pathway is cofactor biosynthesis; FAD biosynthesis; FAD from FMN: step 1/1. Catalyzes the adenylation of flavin mononucleotide (FMN) to form flavin adenine dinucleotide (FAD) coenzyme. The polypeptide is Probable FAD synthase (Caenorhabditis briggsae).